Reading from the N-terminus, the 380-residue chain is O-phospho-L-seryl-tRNA:Cys-tRNA synthase (380 aa).

Residues 86 to 87, Asn192, and 215 to 217 contribute to the pyridoxal 5'-phosphate site; these read AR and SGH. Lys218 carries the N6-(pyridoxal phosphate)lysine modification.

It belongs to the SepCysS family. In terms of assembly, homodimer. Interacts with SepRS. Pyridoxal 5'-phosphate is required as a cofactor.

The enzyme catalyses O-phospho-L-seryl-tRNA(Cys) + hydrogen sulfide + H(+) = L-cysteinyl-tRNA(Cys) + phosphate. Functionally, converts O-phospho-L-seryl-tRNA(Cys) (Sep-tRNA(Cys)) to L-cysteinyl-tRNA(Cys) (Cys-tRNA(Cys)). This Methanococcus maripaludis (strain C6 / ATCC BAA-1332) protein is O-phospho-L-seryl-tRNA:Cys-tRNA synthase.